Consider the following 722-residue polypeptide: Golgin subfamily A member 5 (722 aa).

Over Met-1–Arg-689 the chain is Cytoplasmic. Disordered stretches follow at residues Thr-90–Ile-158 and Thr-194–Leu-215. The span at Arg-91 to Ser-109 shows a compositional bias: low complexity. The span at Asp-134 to Ser-148 shows a compositional bias: basic and acidic residues. Residues Ala-149 to Ile-158 show a composition bias toward polar residues. Low complexity predominate over residues Leu-195–Asp-209. Residues Lys-211–Gly-622 adopt a coiled-coil conformation. Residues Val-690 to Tyr-710 form a helical; Anchor for type IV membrane protein membrane-spanning segment. Residues Thr-711–Lys-722 lie on the Lumenal side of the membrane.

The protein resides in the golgi apparatus membrane. Involved in maintaining Golgi structure. Stimulates the formation of Golgi stacks and ribbons. Involved in intra-Golgi retrograde transport. The protein is Golgin subfamily A member 5 (golga5) of Xenopus laevis (African clawed frog).